We begin with the raw amino-acid sequence, 164 residues long: Small ribosomal subunit protein uS5 (164 aa).

Residues 10–73 (LEERVVAINR…EAAKKNMIEV (64 aa)) form the S5 DRBM domain.

This sequence belongs to the universal ribosomal protein uS5 family. Part of the 30S ribosomal subunit. Contacts proteins S4 and S8.

Functionally, with S4 and S12 plays an important role in translational accuracy. Its function is as follows. Located at the back of the 30S subunit body where it stabilizes the conformation of the head with respect to the body. The polypeptide is Small ribosomal subunit protein uS5 (Streptococcus pyogenes serotype M1).